Reading from the N-terminus, the 116-residue chain is Outer membrane protein assembly factor BamE (116 aa).

An N-terminal signal peptide occupies residues 1 to 22; that stretch reads MITMRCKMLTAAAVMLAMLTAG. Cysteine 23 is lipidated: N-palmitoyl cysteine. Cysteine 23 is lipidated: S-diacylglycerol cysteine.

This sequence belongs to the BamE family. Part of the Bam complex, which is composed of the outer membrane protein BamA, and four lipoproteins BamB, BamC, BamD and BamE.

The protein localises to the cell outer membrane. Its function is as follows. Part of the outer membrane protein assembly complex, which is involved in assembly and insertion of beta-barrel proteins into the outer membrane. This is Outer membrane protein assembly factor BamE from Yersinia pestis.